The chain runs to 149 residues: Probable calcium-binding protein CML25/26 (149 aa).

EF-hand domains are found at residues 1–35 (MASS…ALGE), 37–72 (VSEE…HQLQ), 77–113 (ESLR…LGSE), and 117–149 (LEME…MLMA). Ca(2+) contacts are provided by D13, D15, D17, K19, E24, D50, D52, D54, and E61. Ca(2+)-binding residues include D130, N132, D134, and E141.

In terms of biological role, potential calcium sensor. This chain is Probable calcium-binding protein CML25/26 (CML25), found in Oryza sativa subsp. japonica (Rice).